The sequence spans 616 residues: Kelch-like protein 36 (616 aa).

Residues 46–113 (CDVVLVADEQ…LYGGELVLDG (68 aa)) form the BTB domain. The region spanning 148 to 250 (YLYLQELASI…PKNDLLHRVK (103 aa)) is the BACK domain. Kelch repeat units lie at residues 296-345 (CLLF…VLGG), 346-397 (FIFI…SIED), 398-444 (MLVA…IYKD), 446-493 (VYIS…SLGD), 494-546 (SIYS…VWEG), and 547-595 (RIYI…VCAL).

In terms of assembly, interacts with CUL3.

It functions in the pathway protein modification; protein ubiquitination. Probable substrate-specific adapter of an E3 ubiquitin-protein ligase complex which mediates the ubiquitination and subsequent proteasomal degradation of target proteins. The polypeptide is Kelch-like protein 36 (KLHL36) (Bos taurus (Bovine)).